A 1166-amino-acid polypeptide reads, in one-letter code: Peroxisomal ATPase PEX6 (1166 aa).

It belongs to the AAA ATPase family. In terms of assembly, interacts with PEX1; forming the PEX1-PEX6 AAA ATPase complex, which is composed of a heterohexamer formed by a trimer of PEX1-PEX6 dimers.

It is found in the membrane. It carries out the reaction ATP + H2O = ADP + phosphate + H(+). In terms of biological role, component of the PEX1-PEX6 AAA ATPase complex involved in peroxisome biosynthesis. The complex acts as a protein dislocase complex that mediates the ATP-dependent extraction of the PEX5 receptor from peroxisomal membranes, an essential step for PEX5 recycling. Specifically recognizes PEX5 monoubiquitinated at 'Cys-6', and pulls it out of the peroxisome lumen through the PEX2-PEX10-PEX12 retrotranslocation channel. Extraction by the PEX1-PEX6 AAA ATPase complex is accompanied by unfolding of the TPR repeats and release of bound cargo from PEX5. In Komagataella phaffii (strain GS115 / ATCC 20864) (Yeast), this protein is Peroxisomal ATPase PEX6.